A 357-amino-acid polypeptide reads, in one-letter code: 3-isopropylmalate dehydrogenase (357 aa).

Residue 76–89 (GYQWESLDISVRPE) participates in NAD(+) binding. Arg-96, Arg-106, Arg-134, and Asp-224 together coordinate substrate. Positions 224, 248, and 252 each coordinate Mg(2+). 282-294 (GSAPDIAGQNIAN) provides a ligand contact to NAD(+).

The protein belongs to the isocitrate and isopropylmalate dehydrogenases family. LeuB type 1 subfamily. As to quaternary structure, homodimer. Mg(2+) serves as cofactor. The cofactor is Mn(2+).

Its subcellular location is the cytoplasm. It carries out the reaction (2R,3S)-3-isopropylmalate + NAD(+) = 4-methyl-2-oxopentanoate + CO2 + NADH. It participates in amino-acid biosynthesis; L-leucine biosynthesis; L-leucine from 3-methyl-2-oxobutanoate: step 3/4. Functionally, catalyzes the oxidation of 3-carboxy-2-hydroxy-4-methylpentanoate (3-isopropylmalate) to 3-carboxy-4-methyl-2-oxopentanoate. The product decarboxylates to 4-methyl-2 oxopentanoate. This is 3-isopropylmalate dehydrogenase from Hydrogenovibrio crunogenus (strain DSM 25203 / XCL-2) (Thiomicrospira crunogena).